A 343-amino-acid chain; its full sequence is Trans-enoyl reductase ACTTS2 (343 aa).

An NADP(+)-binding site is contributed by 42–45; the sequence is GDWK. 128–135 is a binding site for substrate; sequence VGITTVGQ. NADP(+) contacts are provided by residues 162 to 165, 185 to 188, and Y203; these read STAT and SPHN. Position 268–272 (268–272) interacts with substrate; sequence GYTAL. Position 333–334 (333–334) interacts with NADP(+); that stretch reads VS.

This sequence belongs to the zinc-containing alcohol dehydrogenase family. In terms of assembly, monomer.

The protein operates within mycotoxin biosynthesis. Trans-enoyl reductase; part of the gene clusters that mediate the biosynthesis of the host-selective toxins (HSTs) ACT-toxins responsible for brown spot of tangerine disease by the tangerine pathotype which affects tangerines and mandarins. ACT-toxins consist of three moieties, 9,10-epoxy-8-hydroxy-9-methyl-decatrienoic acid (EDA), valine and a polyketide. ACT-toxin I is toxic to both citrus and pear; toxin II the 5''-deoxy derivative of ACT-toxin I, is highly toxic to pear and slightly toxic to citrus. On cellular level, ACT-toxins affect plasma membrane of susceptible cells and cause a sudden increase in loss of K(+) after a few minutes of toxin treatment. The acyl-CoA ligase ACTT1, the hydrolase ACTT2, the enoyl-CoA hydratases ACTT3 and ACTT6, and the acyl-CoA synthetase ACTT5 are all involved in the biosynthesis of the AK-, AF- and ACT-toxin common 9,10-epoxy-8-hydroxy-9-methyl-decatrienoic acid (EDA) structural moiety. The exact role of each enzyme, and of additional enzymes identified within the AF-toxin clusters have still to be determined. On the other hand, ACTTS1 to ACTTS4 are specific to the tangerine pathotype. The function of ACTTS3 is to elongate the polyketide chain portion of ACT-toxin that is unique to this toxin. The enoyl-reductase ACTTS2 might complement the missing enoyl-reductase (ER) domain in ACTTS3 in the synthesis of the polyketide portion of ACT-toxin. The roles of the nonribosomal peptide synthetases-related proteins ACTTS1 and ACTTS4 have also still not been elucidated. The chain is Trans-enoyl reductase ACTTS2 from Alternaria alternata (Alternaria rot fungus).